Consider the following 217-residue polypeptide: Peptide methionine sulfoxide reductase MsrA 1 (217 aa).

C57 is an active-site residue.

The protein belongs to the MsrA Met sulfoxide reductase family.

It carries out the reaction L-methionyl-[protein] + [thioredoxin]-disulfide + H2O = L-methionyl-(S)-S-oxide-[protein] + [thioredoxin]-dithiol. The catalysed reaction is [thioredoxin]-disulfide + L-methionine + H2O = L-methionine (S)-S-oxide + [thioredoxin]-dithiol. Has an important function as a repair enzyme for proteins that have been inactivated by oxidation. Catalyzes the reversible oxidation-reduction of methionine sulfoxide in proteins to methionine. The protein is Peptide methionine sulfoxide reductase MsrA 1 (msrA1) of Rhizobium meliloti (strain 1021) (Ensifer meliloti).